Consider the following 51-residue polypeptide: DNA-directed RNA polymerase subunit Rpo12 (51 aa).

3 residues coordinate Zn(2+): Cys-14, Cys-29, and Cys-32.

It belongs to the archaeal Rpo12/eukaryotic RPC10 RNA polymerase subunit family. In terms of assembly, part of the RNA polymerase complex. The cofactor is Zn(2+).

Its subcellular location is the cytoplasm. The catalysed reaction is RNA(n) + a ribonucleoside 5'-triphosphate = RNA(n+1) + diphosphate. In terms of biological role, DNA-dependent RNA polymerase (RNAP) catalyzes the transcription of DNA into RNA using the four ribonucleoside triphosphates as substrates. The protein is DNA-directed RNA polymerase subunit Rpo12 of Methanopyrus kandleri (strain AV19 / DSM 6324 / JCM 9639 / NBRC 100938).